Reading from the N-terminus, the 271-residue chain is Proteasome inhibitor PI31 subunit (271 aa).

Alanine 2 carries the N-acetylalanine modification. The interval alanine 2 to arginine 150 is important for homodimerization and interaction with FBXO7. 2 positions are modified to phosphoserine: serine 153 and serine 189. At arginine 205 the chain carries Omega-N-methylarginine. Asymmetric dimethylarginine is present on arginine 219. Positions leucine 221–leucine 271 are disordered. Arginine 231 carries the post-translational modification Omega-N-methylarginine. At serine 252 the chain carries Phosphoserine. The segment covering glycine 255–glycine 265 has biased composition (pro residues).

Belongs to the proteasome inhibitor PI31 family. In terms of assembly, monomer and homodimer. Interacts with FBXO7.

Its subcellular location is the cytoplasm. It localises to the endoplasmic reticulum. Plays an important role in control of proteasome function. Inhibits the hydrolysis of protein and peptide substrates by the 20S proteasome. Also inhibits the activation of the proteasome by the proteasome regulatory proteins PA700 and PA28. In Rattus norvegicus (Rat), this protein is Proteasome inhibitor PI31 subunit (Psmf1).